A 233-amino-acid polypeptide reads, in one-letter code: 7-cyano-7-deazaguanine synthase (233 aa).

An ATP-binding site is contributed by 7-17 (LSGGLDSLVTS). The Zn(2+) site is built by Cys-195, Cys-206, Cys-209, and Cys-212.

Belongs to the QueC family. Zn(2+) serves as cofactor.

The enzyme catalyses 7-carboxy-7-deazaguanine + NH4(+) + ATP = 7-cyano-7-deazaguanine + ADP + phosphate + H2O + H(+). It participates in purine metabolism; 7-cyano-7-deazaguanine biosynthesis. In terms of biological role, catalyzes the ATP-dependent conversion of 7-carboxy-7-deazaguanine (CDG) to 7-cyano-7-deazaguanine (preQ(0)). In Methanococcus vannielii (strain ATCC 35089 / DSM 1224 / JCM 13029 / OCM 148 / SB), this protein is 7-cyano-7-deazaguanine synthase.